The primary structure comprises 610 residues: Dihydroxy-acid dehydratase (610 aa).

D81 is a Mg(2+) binding site. C122 is a [2Fe-2S] cluster binding site. Residues D123 and K124 each coordinate Mg(2+). Residue K124 is modified to N6-carboxylysine. C193 is a binding site for [2Fe-2S] cluster. A Mg(2+)-binding site is contributed by E489. S515 functions as the Proton acceptor in the catalytic mechanism.

The protein belongs to the IlvD/Edd family. As to quaternary structure, homodimer. [2Fe-2S] cluster serves as cofactor. Requires Mg(2+) as cofactor.

It catalyses the reaction (2R)-2,3-dihydroxy-3-methylbutanoate = 3-methyl-2-oxobutanoate + H2O. The catalysed reaction is (2R,3R)-2,3-dihydroxy-3-methylpentanoate = (S)-3-methyl-2-oxopentanoate + H2O. It functions in the pathway amino-acid biosynthesis; L-isoleucine biosynthesis; L-isoleucine from 2-oxobutanoate: step 3/4. The protein operates within amino-acid biosynthesis; L-valine biosynthesis; L-valine from pyruvate: step 3/4. Its function is as follows. Functions in the biosynthesis of branched-chain amino acids. Catalyzes the dehydration of (2R,3R)-2,3-dihydroxy-3-methylpentanoate (2,3-dihydroxy-3-methylvalerate) into 2-oxo-3-methylpentanoate (2-oxo-3-methylvalerate) and of (2R)-2,3-dihydroxy-3-methylbutanoate (2,3-dihydroxyisovalerate) into 2-oxo-3-methylbutanoate (2-oxoisovalerate), the penultimate precursor to L-isoleucine and L-valine, respectively. The polypeptide is Dihydroxy-acid dehydratase (Xylella fastidiosa (strain M23)).